The primary structure comprises 357 residues: Protein RecA (357 aa).

78 to 85 (GPESSGKT) contributes to the ATP binding site.

It belongs to the RecA family.

Its subcellular location is the cytoplasm. Its function is as follows. Can catalyze the hydrolysis of ATP in the presence of single-stranded DNA, the ATP-dependent uptake of single-stranded DNA by duplex DNA, and the ATP-dependent hybridization of homologous single-stranded DNAs. It interacts with LexA causing its activation and leading to its autocatalytic cleavage. The protein is Protein RecA of Cereibacter sphaeroides (strain ATCC 17029 / ATH 2.4.9) (Rhodobacter sphaeroides).